The primary structure comprises 601 residues: Potassium-transporting ATPase potassium-binding subunit (601 aa).

12 helical membrane-spanning segments follow: residues 6–26 (IMLL…LGLF), 65–85 (SYAI…YAVQ), 136–156 (ALTG…FALI), 179–199 (LYIL…QGVI), 283–303 (FSNF…CFTF), 313–333 (GWAV…IVMT), 367–387 (FGIS…CGAV), 397–417 (MGGF…GGVG), 419–439 (GLYG…LMIG), 458–478 (SIAI…AVLV), 524–544 (MLAI…LAIA), and 566–586 (LFVA…YVPA).

It belongs to the KdpA family. As to quaternary structure, the system is composed of three essential subunits: KdpA, KdpB and KdpC.

The protein localises to the cell inner membrane. Functionally, part of the high-affinity ATP-driven potassium transport (or Kdp) system, which catalyzes the hydrolysis of ATP coupled with the electrogenic transport of potassium into the cytoplasm. This subunit binds the periplasmic potassium ions and delivers the ions to the membrane domain of KdpB through an intramembrane tunnel. This Herminiimonas arsenicoxydans protein is Potassium-transporting ATPase potassium-binding subunit.